Reading from the N-terminus, the 438-residue chain is MGYQTIPSQGLSGEICVPGDKSISHRAVLLAAIAEGQTQVDGFLMGADNLAMVSALQQMGASIQVIEDENILVVEGVGMTGLQAPPEALDCGNSGTAIRLLSGLLAGQPFNTVLTGDSSLQRRPMKRIIDPLTLMGAKIDSTGNVPPLKIYGNPRLTGIHYQLPMASAQVKSCLLLAGLYARGKTCITEPAPSRDHTERLLKHFHYTLQKDKQSICVSGGGKLKANDISIPGDISSAAFFIVAATITPGSAIRLCRVGVNPTRLGVINLLKMMGADIEVTHYTEKNEEPTADITVRHARLKGIDIPPDQVPLTIDEFPVLLIAAAVAQGKTVLRDVAELRVKETDRIAAMVDGLQKLGIAAESLPDGVIIQGGTLEGGEVNSYDDHRIAMAFAVAGTLAKGPVRIRNCDNVKTSFPNFVELANEVGMNVKGVRGRGGF.

The 3-phosphoshikimate site is built by K21, S22, and R26. K21 serves as a coordination point for phosphoenolpyruvate. 2 residues coordinate phosphoenolpyruvate: G95 and R123. Residues S167, Q169, D315, and K342 each coordinate 3-phosphoshikimate. A phosphoenolpyruvate-binding site is contributed by Q169. Catalysis depends on D315, which acts as the Proton acceptor. Phosphoenolpyruvate-binding residues include R346 and R387.

This sequence belongs to the EPSP synthase family. In terms of assembly, monomer.

The protein localises to the cytoplasm. The enzyme catalyses 3-phosphoshikimate + phosphoenolpyruvate = 5-O-(1-carboxyvinyl)-3-phosphoshikimate + phosphate. It functions in the pathway metabolic intermediate biosynthesis; chorismate biosynthesis; chorismate from D-erythrose 4-phosphate and phosphoenolpyruvate: step 6/7. Functionally, catalyzes the transfer of the enolpyruvyl moiety of phosphoenolpyruvate (PEP) to the 5-hydroxyl of shikimate-3-phosphate (S3P) to produce enolpyruvyl shikimate-3-phosphate and inorganic phosphate. This is 3-phosphoshikimate 1-carboxyvinyltransferase from Coxiella burnetii (strain CbuK_Q154) (Coxiella burnetii (strain Q154)).